Consider the following 184-residue polypeptide: uncharacterized protein (184 aa).

The protein to M.tuberculosis Rv0487.

This is an uncharacterized protein from Mycobacterium leprae (strain TN).